We begin with the raw amino-acid sequence, 482 residues long: Glutamate--tRNA ligase 2 (482 aa).

The 'HIGH' region signature appears at 8–18 (PSPTGQLHIGG). Residues 249-253 (KLSKR) carry the 'KMSKS' region motif. K252 is a binding site for ATP.

The protein belongs to the class-I aminoacyl-tRNA synthetase family. Glutamate--tRNA ligase type 1 subfamily. As to quaternary structure, monomer.

The protein resides in the cytoplasm. The enzyme catalyses tRNA(Glu) + L-glutamate + ATP = L-glutamyl-tRNA(Glu) + AMP + diphosphate. Catalyzes the attachment of glutamate to tRNA(Glu) in a two-step reaction: glutamate is first activated by ATP to form Glu-AMP and then transferred to the acceptor end of tRNA(Glu). The polypeptide is Glutamate--tRNA ligase 2 (Caldicellulosiruptor saccharolyticus (strain ATCC 43494 / DSM 8903 / Tp8T 6331)).